The following is a 418-amino-acid chain: Histidine--tRNA ligase (418 aa).

The protein belongs to the class-II aminoacyl-tRNA synthetase family.

The protein localises to the cytoplasm. The catalysed reaction is tRNA(His) + L-histidine + ATP = L-histidyl-tRNA(His) + AMP + diphosphate + H(+). The sequence is that of Histidine--tRNA ligase from Methanococcus maripaludis (strain C6 / ATCC BAA-1332).